Consider the following 261-residue polypeptide: Methylmalonyl-CoA decarboxylase (261 aa).

Substrate is bound by residues 64-68 (AGHDI), glycine 110, threonine 132, and lysine 253.

The protein belongs to the enoyl-CoA hydratase/isomerase family. In terms of assembly, dimer of homotrimers.

It catalyses the reaction (R)-methylmalonyl-CoA + H(+) = propanoyl-CoA + CO2. Catalyzes the decarboxylation of (R)-methylmalonyl-CoA to propionyl-CoA. Could be part of a pathway that converts succinate to propanoate. The protein is Methylmalonyl-CoA decarboxylase (scpB) of Escherichia coli (strain K12).